A 590-amino-acid chain; its full sequence is Leukocyte immunoglobulin-like receptor subfamily B member 5 (590 aa).

The signal sequence occupies residues 1–23 (MTLTLSVLICLGLSVGPRTCVQA). The Extracellular portion of the chain corresponds to 24 to 458 (GTLPKPTLWA…PQSGLGRHLG (435 aa)). Ig-like C2-type domains follow at residues 27-116 (PKPT…LELV), 111-228 (DPLE…SLLI), 224-313 (PSLL…DPLD), and 337-418 (GENV…LVVS). Residues C49 and C98 are joined by a disulfide bond. The N-linked (GlcNAc...) asparagine glycan is linked to N139. 2 disulfides stabilise this stretch: C144–C195 and C244–C295. N-linked (GlcNAc...) asparagine glycans are attached at residues N279 and N339. An intrachain disulfide couples C344 to C395. Positions 416–433 (VVSGPSGDPSLSPTGSTP) are enriched in low complexity. Residues 416–449 (VVSGPSGDPSLSPTGSTPTPGPEDQPLTPTGLDP) are disordered. A helical membrane pass occupies residues 459-479 (VVTGVSVAFVLLLFLLLFLLL). Over 480–590 (RHRHQSKHRT…PSIYAPLAIH (111 aa)) the chain is Cytoplasmic. Disordered stretches follow at residues 488–514 (RTSAHFYRPAGAAGPEPKDQGLQKRAS) and 529–550 (KDTQPKDGVEMDAPAAASEAPQ). S514 bears the Phosphoserine mark. The ITIM motif 1 signature appears at 552-557 (VTYAQL). Basic and acidic residues predominate over residues 562–578 (LRREATEPPPSQEREPP). The interval 562–590 (LRREATEPPPSQEREPPAEPSIYAPLAIH) is disordered. The ITIM motif 2 signature appears at 582-587 (SIYAPL).

As to expression, detected in a natural killer (NK) cells.

Its subcellular location is the membrane. In terms of biological role, may act as receptor for class I MHC antigens. The sequence is that of Leukocyte immunoglobulin-like receptor subfamily B member 5 (LILRB5) from Homo sapiens (Human).